The sequence spans 164 residues: Phosphopantetheine adenylyltransferase (164 aa).

Ser9 lines the substrate pocket. ATP contacts are provided by residues Ser9–Phe10 and His17. Positions 41, 73, and 87 each coordinate substrate. ATP-binding positions include Gly88–Arg90, Glu98, and Tyr122–Ser128.

It belongs to the bacterial CoaD family. As to quaternary structure, homohexamer. It depends on Mg(2+) as a cofactor.

Its subcellular location is the cytoplasm. The enzyme catalyses (R)-4'-phosphopantetheine + ATP + H(+) = 3'-dephospho-CoA + diphosphate. It functions in the pathway cofactor biosynthesis; coenzyme A biosynthesis; CoA from (R)-pantothenate: step 4/5. Its function is as follows. Reversibly transfers an adenylyl group from ATP to 4'-phosphopantetheine, yielding dephospho-CoA (dPCoA) and pyrophosphate. This Rhodococcus erythropolis (strain PR4 / NBRC 100887) protein is Phosphopantetheine adenylyltransferase.